The sequence spans 463 residues: tRNA-2-methylthio-N(6)-dimethylallyladenosine synthase (463 aa).

Residues 19–135 (GSYWITTFGC…LESLLNQVDS (117 aa)) form the MTTase N-terminal domain. 6 residues coordinate [4Fe-4S] cluster: cysteine 28, cysteine 64, cysteine 98, cysteine 170, cysteine 174, and cysteine 177. One can recognise a Radical SAM core domain in the interval 156 to 393 (RDSSICGWVN…NSLVENIAKE (238 aa)). The 68-residue stretch at 396-463 (QRYKNTSQEI…RPFSLTAKLL (68 aa)) folds into the TRAM domain.

It belongs to the methylthiotransferase family. MiaB subfamily. Monomer. [4Fe-4S] cluster is required as a cofactor.

The protein resides in the cytoplasm. It carries out the reaction N(6)-dimethylallyladenosine(37) in tRNA + (sulfur carrier)-SH + AH2 + 2 S-adenosyl-L-methionine = 2-methylsulfanyl-N(6)-dimethylallyladenosine(37) in tRNA + (sulfur carrier)-H + 5'-deoxyadenosine + L-methionine + A + S-adenosyl-L-homocysteine + 2 H(+). Functionally, catalyzes the methylthiolation of N6-(dimethylallyl)adenosine (i(6)A), leading to the formation of 2-methylthio-N6-(dimethylallyl)adenosine (ms(2)i(6)A) at position 37 in tRNAs that read codons beginning with uridine. The sequence is that of tRNA-2-methylthio-N(6)-dimethylallyladenosine synthase from Prochlorococcus marinus (strain NATL2A).